A 656-amino-acid polypeptide reads, in one-letter code: Protein terminal ear1 (656 aa).

Residues 211–283 enclose the RRM domain; sequence SLVVLSPLPG…RRLVVEFTRP (73 aa). 2 disordered regions span residues 280–408 and 576–656; these read FTRP…WKGR and LTDP…GYDD. Residues 288 to 299 are compositionally biased toward basic residues; that stretch reads PRRRGYAPHQHR. Residues 314 to 331 show a composition bias toward low complexity; it reads PSQPTSSQPPASSSSSGS. Residues 346-358 are compositionally biased toward polar residues; sequence CKSSAGSDQSSKG. 3 stretches are compositionally biased toward low complexity: residues 377–397, 585–601, and 612–630; these read AAAAASSSTPTASGKQTQKGV, RSPAASSASSPPKSRAA, and PAPSSSADGASSTTTSTHA. Basic and acidic residues predominate over residues 642-656; sequence DIRLAGELRRLGYDD.

As to expression, expressed below the shoot tip down the flanks of shoot apex in an alternating pattern. Not expressed in root tips, leaves or immature ears (female inflorescences).

Probable RNA-binding protein. Involved in the regulation of leaf initiation rate and shoot development. Seems to act more predominantly in the early stages of the leaf development, rather than in the later phase. In Zea mays (Maize), this protein is Protein terminal ear1 (TE1).